The sequence spans 1265 residues: Methionine synthase (1265 aa).

In terms of domain architecture, Hcy-binding spans 19–338 (QDEIEAILQE…DHIREIAEAV (320 aa)). Positions 260, 323, and 324 each coordinate Zn(2+). The Pterin-binding domain maps to 371 to 632 (FVNIGERCNV…IHKELLQLCE (262 aa)). (6S)-5,6,7,8-tetrahydrofolate contacts are provided by residues 382–384 (GSR), Asp-449, Asn-470, Asp-537, Asn-579, Arg-585, and Arg-591. The B12-binding N-terminal domain occupies 662–759 (QTDEWRNGPL…FMEKEREETK (98 aa)). Methylcob(III)alamin-binding positions include Glu-709, 782 to 786 (GDVHD), His-785, Ser-830, Thr-834, and Ala-886. The B12-binding domain occupies 772-907 (QGTIVLATVK…DENLKDEYFE (136 aa)). Residues 923-1265 (SLKERRYLTL…LGPILGYDTD (343 aa)) enclose the AdoMet activation domain. Residues Asp-974, Arg-1172, and 1227–1228 (YF) contribute to the S-adenosyl-L-methionine site. Thr-1264 is subject to Phosphothreonine.

Belongs to the vitamin-B12 dependent methionine synthase family. In terms of assembly, monomer. Dimer. Forms a multiprotein complex with MMACHC, MMADHC and MTRR. It depends on methylcob(III)alamin as a cofactor. Zn(2+) serves as cofactor.

The protein localises to the cytoplasm. It catalyses the reaction (6S)-5-methyl-5,6,7,8-tetrahydrofolate + L-homocysteine = (6S)-5,6,7,8-tetrahydrofolate + L-methionine. It functions in the pathway amino-acid biosynthesis; L-methionine biosynthesis via de novo pathway; L-methionine from L-homocysteine (MetH route): step 1/1. In terms of biological role, catalyzes the transfer of a methyl group from methylcob(III)alamin (MeCbl) to homocysteine, yielding enzyme-bound cob(I)alamin and methionine in the cytosol. MeCbl is an active form of cobalamin (vitamin B12) used as a cofactor for methionine biosynthesis. Cob(I)alamin form is regenerated to MeCbl by a transfer of a methyl group from 5-methyltetrahydrofolate. The processing of cobalamin in the cytosol occurs in a multiprotein complex composed of at least MMACHC, MMADHC, MTRR (methionine synthase reductase) and MTR which may contribute to shuttle safely and efficiently cobalamin towards MTR in order to produce methionine. The sequence is that of Methionine synthase (MTR) from Bos taurus (Bovine).